A 253-amino-acid polypeptide reads, in one-letter code: Imidazole glycerol phosphate synthase subunit HisF (253 aa).

Catalysis depends on residues Asp11 and Asp130.

It belongs to the HisA/HisF family. As to quaternary structure, heterodimer of HisH and HisF.

The protein localises to the cytoplasm. The catalysed reaction is 5-[(5-phospho-1-deoxy-D-ribulos-1-ylimino)methylamino]-1-(5-phospho-beta-D-ribosyl)imidazole-4-carboxamide + L-glutamine = D-erythro-1-(imidazol-4-yl)glycerol 3-phosphate + 5-amino-1-(5-phospho-beta-D-ribosyl)imidazole-4-carboxamide + L-glutamate + H(+). It participates in amino-acid biosynthesis; L-histidine biosynthesis; L-histidine from 5-phospho-alpha-D-ribose 1-diphosphate: step 5/9. In terms of biological role, IGPS catalyzes the conversion of PRFAR and glutamine to IGP, AICAR and glutamate. The HisF subunit catalyzes the cyclization activity that produces IGP and AICAR from PRFAR using the ammonia provided by the HisH subunit. The polypeptide is Imidazole glycerol phosphate synthase subunit HisF (Geotalea daltonii (strain DSM 22248 / JCM 15807 / FRC-32) (Geobacter daltonii)).